The sequence spans 77 residues: Large ribosomal subunit protein bL28 (77 aa).

This sequence belongs to the bacterial ribosomal protein bL28 family.

This chain is Large ribosomal subunit protein bL28, found in Albidiferax ferrireducens (strain ATCC BAA-621 / DSM 15236 / T118) (Rhodoferax ferrireducens).